A 226-amino-acid polypeptide reads, in one-letter code: Uracil-DNA glycosylase (226 aa).

D68 serves as the catalytic Proton acceptor.

It belongs to the uracil-DNA glycosylase (UDG) superfamily. UNG family.

The protein localises to the cytoplasm. It catalyses the reaction Hydrolyzes single-stranded DNA or mismatched double-stranded DNA and polynucleotides, releasing free uracil.. Its function is as follows. Excises uracil residues from the DNA which can arise as a result of misincorporation of dUMP residues by DNA polymerase or due to deamination of cytosine. This chain is Uracil-DNA glycosylase, found in Mycobacteroides abscessus (strain ATCC 19977 / DSM 44196 / CCUG 20993 / CIP 104536 / JCM 13569 / NCTC 13031 / TMC 1543 / L948) (Mycobacterium abscessus).